A 278-amino-acid chain; its full sequence is Antiviral protein MAP (278 aa).

Positions 1–28 (MLTTTKVFFLLLTTWITWYAIVNPQSRA) are cleaved as a signal peptide. Cys-64 and Cys-248 form a disulfide bridge. Glu-196 is an active-site residue.

It catalyses the reaction Endohydrolysis of the N-glycosidic bond at one specific adenosine on the 28S rRNA.. Its function is as follows. Inhibits viral infection of plants, and protein synthesis in vitro. The sequence is that of Antiviral protein MAP from Mirabilis jalapa (Garden four-o'clock).